The chain runs to 547 residues: MSSLINNAMSGLNAAQAALNTASNNISSYNVAGYTRQTTIMAQANSTLGAGGWVGNGVYVSGVQREYDAFITNQLRAAQTQSSGLTARYEQMSKIDNMLSTSTSSLATQMQDFFTSLQTLVSNAEDPAARQALIGKSEGLVNQFKTTDQYLRDQDKQVNIAIGASVDQINNYAKQIASLNDQISRLTGVGAGASPNNLLDQRDQLVSELNQIVGVEVSVQDGGTYNITMANGYSLVQGSTARQLAAVPSSADPSRTTVAYVDGTAGNIEIPEKLLNTGSLGGILTFRSQDLDQTRNTLGQLALAFAEAFNTQHKAGFDANGDAGEDFFAIGKPAVLQNTKNKGDVAIGATVTDASAVLATDYKISFDNNQWQVTRLASNTTFTVTPDANGKVAFDGLELTFTGTPAVNDSFTLKPVSDAIVNMDVLITDEAKIAMASEEDAGDSDNRNGQALLDLQSNSKTVGGAKSFNDAYASLVSDIGNKTATLKTSSATQGNVVTQLSNQQQSISGVNLDEEYGNLQRFQQYYLANAQVLQTANAIFDALINIR.

The protein belongs to the flagella basal body rod proteins family.

The protein localises to the secreted. Its subcellular location is the bacterial flagellum. The sequence is that of Flagellar hook-associated protein 1 (flgK) from Escherichia coli (strain K12).